We begin with the raw amino-acid sequence, 455 residues long: Bifunctional protein GlmU (455 aa).

The tract at residues 1 to 228 (MTQPLHVIIL…AQEAEGANDP (228 aa)) is pyrophosphorylase. Residues 10–13 (LAAG), Lys-24, Gln-76, 81–82 (GT), 103–105 (YGD), Gly-138, Glu-153, Asn-168, and Asn-226 contribute to the UDP-N-acetyl-alpha-D-glucosamine site. Asp-105 provides a ligand contact to Mg(2+). Asn-226 is a binding site for Mg(2+). Residues 229–249 (WQLSQLERAWQRRAVRALCAQ) form a linker region. Residues 250-455 (GARVRDPARL…DGWKRPLKKS (206 aa)) form an N-acetyltransferase region. Positions 332 and 350 each coordinate UDP-N-acetyl-alpha-D-glucosamine. His-362 functions as the Proton acceptor in the catalytic mechanism. Positions 365 and 376 each coordinate UDP-N-acetyl-alpha-D-glucosamine. Acetyl-CoA-binding positions include Ala-379, 385 to 386 (NY), Ser-404, Ala-422, and Arg-439.

In the N-terminal section; belongs to the N-acetylglucosamine-1-phosphate uridyltransferase family. This sequence in the C-terminal section; belongs to the transferase hexapeptide repeat family. As to quaternary structure, homotrimer. The cofactor is Mg(2+).

The protein resides in the cytoplasm. The catalysed reaction is alpha-D-glucosamine 1-phosphate + acetyl-CoA = N-acetyl-alpha-D-glucosamine 1-phosphate + CoA + H(+). The enzyme catalyses N-acetyl-alpha-D-glucosamine 1-phosphate + UTP + H(+) = UDP-N-acetyl-alpha-D-glucosamine + diphosphate. Its pathway is nucleotide-sugar biosynthesis; UDP-N-acetyl-alpha-D-glucosamine biosynthesis; N-acetyl-alpha-D-glucosamine 1-phosphate from alpha-D-glucosamine 6-phosphate (route II): step 2/2. It participates in nucleotide-sugar biosynthesis; UDP-N-acetyl-alpha-D-glucosamine biosynthesis; UDP-N-acetyl-alpha-D-glucosamine from N-acetyl-alpha-D-glucosamine 1-phosphate: step 1/1. The protein operates within bacterial outer membrane biogenesis; LPS lipid A biosynthesis. Its function is as follows. Catalyzes the last two sequential reactions in the de novo biosynthetic pathway for UDP-N-acetylglucosamine (UDP-GlcNAc). The C-terminal domain catalyzes the transfer of acetyl group from acetyl coenzyme A to glucosamine-1-phosphate (GlcN-1-P) to produce N-acetylglucosamine-1-phosphate (GlcNAc-1-P), which is converted into UDP-GlcNAc by the transfer of uridine 5-monophosphate (from uridine 5-triphosphate), a reaction catalyzed by the N-terminal domain. In Stenotrophomonas maltophilia (strain K279a), this protein is Bifunctional protein GlmU.